The primary structure comprises 268 residues: Hydroxypyruvate/pyruvate aldolase (268 aa).

The Proton acceptor role is filled by H48. E152 and D178 together coordinate a divalent metal cation.

It belongs to the HpcH/HpaI aldolase family. Requires Mn(2+) as cofactor. Mg(2+) serves as cofactor. Co(2+) is required as a cofactor.

The enzyme catalyses D-glyceraldehyde + 3-hydroxypyruvate = (3R,4S,5R)-3,4,5,6-tetrahydroxy-2-oxohexanoate. It catalyses the reaction D-glyceraldehyde + 3-hydroxypyruvate = 2-dehydro-D-gluconate. It carries out the reaction D-glyceraldehyde + 3-hydroxypyruvate = 2-dehydro-D-galactonate. The catalysed reaction is D-glyceraldehyde + pyruvate = 2-dehydro-3-deoxy-L-galactonate. The enzyme catalyses 2-dehydro-3-deoxy-D-gluconate = D-glyceraldehyde + pyruvate. Aldolase which can catalyze in vitro the aldolisation reaction between hydroxypyruvate (HPA) or pyruvate (PA) and D-glyceraldehyde (D-GA). The condensation of hydroxypyruvate and D-glyceraldehyde produces (3R,4S,5R)-3,4,5,6-tetrahydroxy-2-oxohexanoate as the major product, 2-dehydro-D-gluconate and 2-dehydro-D-galactonate. The condensation of pyruvate and D-glyceraldehyde produces 2-dehydro-3-deoxy-L-galactonate as the major product and 2-dehydro-3-deoxy-D-gluconate. Also catalyzes the retro-aldol type decarboxylation of oxaloacetate, a general property of known pyruvate aldolases. The chain is Hydroxypyruvate/pyruvate aldolase from Pseudomonas aeruginosa.